The sequence spans 318 residues: Putative HTH-type transcriptional regulatory protein TK0539 (318 aa).

One can recognise an HTH cro/C1-type domain in the interval 131-189; that stretch reads LRELREKHGYSVNELAQLLGVSRKSLLNYERGEQAVSLDVAIQLEEIFDEALAEPIDIL. The H-T-H motif DNA-binding region spans 142-161; that stretch reads VNELAQLLGVSRKSLLNYER.

The sequence is that of Putative HTH-type transcriptional regulatory protein TK0539 from Thermococcus kodakarensis (strain ATCC BAA-918 / JCM 12380 / KOD1) (Pyrococcus kodakaraensis (strain KOD1)).